Reading from the N-terminus, the 196-residue chain is GTP cyclohydrolase 1 (196 aa).

Zn(2+) is bound by residues Cys86, His89, and Cys158.

It belongs to the GTP cyclohydrolase I family. In terms of assembly, toroid-shaped homodecamer, composed of two pentamers of five dimers.

It catalyses the reaction GTP + H2O = 7,8-dihydroneopterin 3'-triphosphate + formate + H(+). It participates in cofactor biosynthesis; 7,8-dihydroneopterin triphosphate biosynthesis; 7,8-dihydroneopterin triphosphate from GTP: step 1/1. The chain is GTP cyclohydrolase 1 from Clostridium botulinum (strain Langeland / NCTC 10281 / Type F).